The sequence spans 637 residues: Biosynthetic arginine decarboxylase (637 aa).

Lys101 carries the post-translational modification N6-(pyridoxal phosphate)lysine. Position 286-296 (286-296 (FDVGGGLAVDY)) interacts with substrate.

Belongs to the Orn/Lys/Arg decarboxylase class-II family. SpeA subfamily. The cofactor is Mg(2+). It depends on pyridoxal 5'-phosphate as a cofactor.

It carries out the reaction L-arginine + H(+) = agmatine + CO2. The protein operates within amine and polyamine biosynthesis; agmatine biosynthesis; agmatine from L-arginine: step 1/1. Functionally, catalyzes the biosynthesis of agmatine from arginine. The protein is Biosynthetic arginine decarboxylase of Shewanella halifaxensis (strain HAW-EB4).